The primary structure comprises 180 residues: ATP-dependent protease subunit HslV (180 aa).

Residue Thr-7 is part of the active site. Na(+)-binding residues include Gly-165, Cys-168, and Thr-171.

This sequence belongs to the peptidase T1B family. HslV subfamily. A double ring-shaped homohexamer of HslV is capped on each side by a ring-shaped HslU homohexamer. The assembly of the HslU/HslV complex is dependent on binding of ATP.

It is found in the cytoplasm. The catalysed reaction is ATP-dependent cleavage of peptide bonds with broad specificity.. Allosterically activated by HslU binding. Functionally, protease subunit of a proteasome-like degradation complex believed to be a general protein degrading machinery. The polypeptide is ATP-dependent protease subunit HslV (Bacillus anthracis (strain A0248)).